Here is a 135-residue protein sequence, read N- to C-terminus: Basic phospholipase A2 10 (135 aa).

Cystine bridges form between C28/C87, C42/C134, C44/C60, C59/C115, C66/C108, C76/C101, and C94/C106. Ca(2+)-binding residues include Y43, G45, and G47. H63 is a catalytic residue. Position 64 (D64) interacts with Ca(2+). D109 is a catalytic residue.

Belongs to the phospholipase A2 family. Group I subfamily. D49 sub-subfamily. Ca(2+) is required as a cofactor. As to expression, expressed by the venom gland.

The protein localises to the secreted. The enzyme catalyses a 1,2-diacyl-sn-glycero-3-phosphocholine + H2O = a 1-acyl-sn-glycero-3-phosphocholine + a fatty acid + H(+). Its function is as follows. Snake venom phospholipase A2 (PLA2) that inhibits neuromuscular transmission by blocking acetylcholine release from the nerve termini. PLA2 catalyzes the calcium-dependent hydrolysis of the 2-acyl groups in 3-sn-phosphoglycerides. The sequence is that of Basic phospholipase A2 10 from Bungarus fasciatus (Banded krait).